A 256-amino-acid polypeptide reads, in one-letter code: uncharacterized protein (256 aa).

8 residues coordinate NADP(+): Ile-18, Ser-37, Lys-46, Asp-66, Tyr-164, Lys-168, Val-197, and Thr-199. The active-site Proton donor is the Tyr-164. The active-site Lowers pKa of active site Tyr is the Lys-168.

Belongs to the short-chain dehydrogenases/reductases (SDR) family.

It localises to the cytoplasm. This is an uncharacterized protein from Saccharomyces cerevisiae (strain ATCC 204508 / S288c) (Baker's yeast).